A 511-amino-acid polypeptide reads, in one-letter code: Probable endopeptidase p60 (511 aa).

An N-terminal signal peptide occupies residues 1-27; that stretch reads MNMKKATIVSAAGIAVTAFAAPSVVSA. The region spanning 28 to 71 is the LysM 1 domain; it reads NTVVVASGDTLWGIASKTGTTVDQLKQLNKLDSDRIVPGQKLTI. The 65-residue stretch at 78-142 folds into the SH3b domain; the sequence is KVEKSVSATW…VNGKYLSDAK (65 aa). One can recognise a LysM 2 domain in the interval 175 to 218; sequence STYKVKSGDTIWALSVKYGVPVQKLIEWNNLSSSSIYVGQTIAV. Low complexity-rich tracts occupy residues 229–257 and 264–282; these read TVKQ…QAKP and KPAV…AKPA. The tract at residues 229 to 291 is disordered; the sequence is TVKQAAPAKV…AVEQKASTPA (63 aa). A LysM 3 domain is found at 297 to 341; sequence ATYKVQNGDSLGKIASLFKVSVADLTNWNNLNATITIYAGQELSV. 2 stretches are compositionally biased toward low complexity: residues 347-362 and 372-390; these read KPKP…SKPA and TNTT…NTSQ. The tract at residues 347–390 is disordered; sequence KPKPAAPAKPAVSKPATSTPAKVTPTNTTNNSTPTTNVNNNTSQ. Residues 393 to 511 enclose the NlpC/P60 domain; that stretch reads SASFSALYAE…GQYLVGFGRV (119 aa). Catalysis depends on Cys-423, which acts as the Nucleophile. The active-site Proton acceptor is the His-473. Residue Asp-485 is part of the active site.

The protein belongs to the peptidase C40 family.

This major extracellular protein may be involved in the invasion of non-professional phagocytic cells by Listeria. This is Probable endopeptidase p60 (iap) from Listeria grayi (Listeria murrayi).